Here is a 192-residue protein sequence, read N- to C-terminus: Ion-translocating oxidoreductase complex subunit A (192 aa).

The next 6 helical transmembrane spans lie at 5–25 (LLLLISTVLVNNFVLVKFLGL), 39–59 (IGMSMATTFVLTLASILSYLV), 65–85 (LPFDLGYLRTMSFILVIAVVV), 102–122 (ALGIYLPLITTNCAVLGVALL), 134–154 (AIYGFGAAVGFSLVLILFSAM), and 171–191 (AIAMITAGLMSLAFMGFTGLV).

Belongs to the NqrDE/RnfAE family. As to quaternary structure, the complex is composed of six subunits: RnfA, RnfB, RnfC, RnfD, RnfE and RnfG.

It is found in the cell inner membrane. In terms of biological role, part of a membrane-bound complex that couples electron transfer with translocation of ions across the membrane. This chain is Ion-translocating oxidoreductase complex subunit A, found in Shewanella oneidensis (strain ATCC 700550 / JCM 31522 / CIP 106686 / LMG 19005 / NCIMB 14063 / MR-1).